The sequence spans 327 residues: Glycerol-3-phosphate dehydrogenase [NAD(P)+] (327 aa).

Trp15, Arg35, and Lys109 together coordinate NADPH. The sn-glycerol 3-phosphate site is built by Lys109, Gly137, and Ser139. An NADPH-binding site is contributed by Ala141. Residues Lys192, Asp245, Ser255, Arg256, and Asn257 each coordinate sn-glycerol 3-phosphate. Lys192 acts as the Proton acceptor in catalysis. Residue Arg256 coordinates NADPH. NADPH contacts are provided by Leu275 and Glu277.

It belongs to the NAD-dependent glycerol-3-phosphate dehydrogenase family.

The protein localises to the cytoplasm. It carries out the reaction sn-glycerol 3-phosphate + NAD(+) = dihydroxyacetone phosphate + NADH + H(+). The catalysed reaction is sn-glycerol 3-phosphate + NADP(+) = dihydroxyacetone phosphate + NADPH + H(+). It functions in the pathway membrane lipid metabolism; glycerophospholipid metabolism. In terms of biological role, catalyzes the reduction of the glycolytic intermediate dihydroxyacetone phosphate (DHAP) to sn-glycerol 3-phosphate (G3P), the key precursor for phospholipid synthesis. The chain is Glycerol-3-phosphate dehydrogenase [NAD(P)+] from Chelativorans sp. (strain BNC1).